The following is a 237-amino-acid chain: Tetraspanin-8 (237 aa).

Residues 1–9 are Cytoplasmic-facing; that stretch reads MAGVSACIK. The chain crosses the membrane as a helical span at residues 10 to 33; the sequence is YSMFTFNFLFWLCGILILALAIWV. The Extracellular portion of the chain corresponds to 34–57; sequence RVSNDSQAIFGSEDVGSSSYVAVD. The helical transmembrane segment at 58-72 threads the bilayer; that stretch reads ILIAVGAIIMILGFL. Over 73-83 the chain is Cytoplasmic; it reads GCCGAIKESRC. A helical transmembrane segment spans residues 84-109; sequence MLLLFFIGLLLILLLQVATGILGAVF. Over 110-205 the chain is Extracellular; the sequence is KSKSDRIVNE…SFIKDFLAKN (96 aa). Residue Asn-118 is glycosylated (N-linked (GlcNAc...) asparagine). A helical transmembrane segment spans residues 206-230; that stretch reads LIIVIGISFGLAVIEILGLVFSMVL. The Cytoplasmic segment spans residues 231-237; the sequence is YCQIGNK.

The protein belongs to the tetraspanin (TM4SF) family. As to quaternary structure, forms homooligomers. Interacts with MEP1B. Interacts with integrin alpha3/ITGA3. Interacts with RICTOR and MTOR. Interacts with ADAM17. Interacts with ECE1. In terms of tissue distribution, gastric, colon, rectal, and pancreatic carcinomas.

Its subcellular location is the cell membrane. Functionally, structural component of specialized membrane microdomains known as tetraspanin-enriched microdomains (TERMs), which act as platforms for receptor clustering and signaling. Participates thereby in diverse biological functions such as cell signal transduction, migration and protein trafficking. Promotes ADAM17-mediated TNF-alpha processing through recruitment of ADAM17 to tetraspanin-enriched micro-domains (TEMs). Forms a complex with RICTOR and integrin alpha3/ITGA3 to mediate mTORC2 activation and AKT1 phosphorylation leading to cell migration. Reduces apoptosis and autophagy induced by high glucose levels through forming a complex with mTOR and RICTOR. Contributes to the maintenance of intestinal epithelial barrier and plays a role in the regulation of intestine inflammation by switching interferon gamma receptor 1/IFNGR1 from clathrin-dependent to lipid raft-dependent endocytosis route to limit STAT1 activation magnitude and duration. Acts as a modulator of the endothelin axis by associating with endothelin converting enzyme ECE1 and regulating its activity of conversion of the endothelin-1 precursor to endothelin. The polypeptide is Tetraspanin-8 (TSPAN8) (Homo sapiens (Human)).